We begin with the raw amino-acid sequence, 407 residues long: D-mannose isomerase (407 aa).

Residues H251 and H383 each act as proton donor/acceptor in the active site.

It belongs to the N-acylglucosamine 2-epimerase family. In terms of assembly, homodimer.

It carries out the reaction D-mannose = D-fructose. The enzyme catalyses D-lyxose = D-xylulose. Its activity is regulated as follows. Significantly inhibited by divalent metal ions such as Cu(2+), Cd(2+) or Ca(2+). Its function is as follows. Catalyzes the reversible isomerization of D-mannose to D-fructose. Shows weaker activity on D-lyxose, but cannot use N-acetyl D-glucosamine. This chain is D-mannose isomerase, found in Thermobifida fusca (Thermomonospora fusca).